We begin with the raw amino-acid sequence, 240 residues long: Citrate synthase-lysine N-methyltransferase CSKMT, mitochondrial (240 aa).

The N-terminal 21 residues, 1-21, are a transit peptide targeting the mitochondrion; the sequence is MAALRRMLHLPRLTMGTCRPF.

Belongs to the methyltransferase superfamily.

It is found in the mitochondrion. The enzyme catalyses L-lysyl-[citrate synthase] + S-adenosyl-L-methionine = N(6)-methyl-L-lysyl-[citrate synthase] + S-adenosyl-L-homocysteine + H(+). It catalyses the reaction N(6)-methyl-L-lysyl-[citrate synthase] + S-adenosyl-L-methionine = N(6),N(6)-dimethyl-L-lysyl-[citrate synthase] + S-adenosyl-L-homocysteine + H(+). It carries out the reaction N(6),N(6)-dimethyl-L-lysyl-[citrate synthase] + S-adenosyl-L-methionine = N(6),N(6),N(6)-trimethyl-L-lysyl-[citrate synthase] + S-adenosyl-L-homocysteine + H(+). With respect to regulation, citrate synthase-lysine methyltransferase activity is inhibited by S-adenosylhomocysteine (AdoHcy) and oxaloacetate (OAA). Protein-lysine methyltransferase that selectively trimethylates citrate synthase (CS) in mitochondria. Seems to conduct trimethylation in a highly distributive manner rather than in a processive manner, and thus introduces a single methyl group per binding event. The protein is Citrate synthase-lysine N-methyltransferase CSKMT, mitochondrial of Pongo abelii (Sumatran orangutan).